Consider the following 866-residue polypeptide: MAHQHDTGTAAAAAGKTAIHYDFAQIQAKWLPVWEKLKPFATDDPEDNRPRKYVLDMFPYPSGDLHMGHAEAYALGDVIARYWRHQGFSVLHPIGWDAFGLPAENAAIKRGLDPRGWTYDNIAQQKASMRRYAPSFDWDRVLQTCDPSYYKWNQWLFLKLYEKGLAYRKASQVNWCPFDQTVLANEQVVNGRCERCDNLVTKKKLTQWYFRITDYADRLLDDLNQLEGAWPAKVILMQRNWIGRSTGADVQFAIEGREEPVAVYTTRPDTLYGVTFMVVAPDSELAAELAEDARPEVKQRFEEYLAAVRGTTEMDRLSTEREKTGVFLERHAVNPLTGESIPIWAADYVLSDYGHGAIMAVPAHDQRDLDFARAFDLPVRVVVDTTQPATGAVPVIKTDPQTGEPLLPESAPLESPAETGQALTGEGRLINSGPFDGLSKSNAIRRVTEALQGSGLGAPAKNFRLRDWLISRQRYWGTPIPIVHCEACGEVPVPESELPVLLPPAEGLDLQPKGRSPLGAASDWVNVSCFSCGGPAQRDTDTMDTFVDSSWYFLRFLNPNDDTRAFDPREAEKWAPVDQYVGGVTHAILHLLYSRFITKVLFDQGFVSFTEPFTVLLNQGMVLMDGSAMSKSRGNLVKLSDQLDAHGVDAVRLTMSFAGPPEDDIDWADVSPSGSAKFLARAWRVAHDVTSAPDVVWKSGDPALRRVTHRFLADTPGLVEAFKFNVVVARLMELVNATRKTIDSGAGPADRAVREAAEVTTMALNLFAPYTAEDMWARLGYEPSVSLVPWRKPDPTLLIEEAVTAIVQVDGKVRDRVEVSPKISVDELEALARSSEAVLRSVGDREIVTVIVRAPKLVNIATRSRS.

The 'HIGH' region motif lies at 59–69 (PYPSGDLHMGH). Residues 393 to 421 (VPVIKTDPQTGEPLLPESAPLESPAETGQ) form a disordered region. Residues 404–418 (EPLLPESAPLESPAE) show a composition bias toward low complexity. The short motif at 628-632 (AMSKS) is the 'KMSKS' region element. Residue lysine 631 participates in ATP binding.

The protein belongs to the class-I aminoacyl-tRNA synthetase family.

The protein resides in the cytoplasm. It carries out the reaction tRNA(Leu) + L-leucine + ATP = L-leucyl-tRNA(Leu) + AMP + diphosphate. This chain is Leucine--tRNA ligase, found in Leifsonia xyli subsp. xyli (strain CTCB07).